A 310-amino-acid polypeptide reads, in one-letter code: tRNA dimethylallyltransferase (310 aa).

13–20 contributes to the ATP binding site; that stretch reads GPTASGKT. Substrate is bound at residue 15-20; it reads TASGKT. Interaction with substrate tRNA regions lie at residues 38-41, 162-166, 243-248, and 276-283; these read DSAL, QRLSR, RCVGYR, and KRQITWLR.

This sequence belongs to the IPP transferase family. As to quaternary structure, monomer. The cofactor is Mg(2+).

It catalyses the reaction adenosine(37) in tRNA + dimethylallyl diphosphate = N(6)-dimethylallyladenosine(37) in tRNA + diphosphate. Functionally, catalyzes the transfer of a dimethylallyl group onto the adenine at position 37 in tRNAs that read codons beginning with uridine, leading to the formation of N6-(dimethylallyl)adenosine (i(6)A). This is tRNA dimethylallyltransferase from Aliivibrio fischeri (strain ATCC 700601 / ES114) (Vibrio fischeri).